Reading from the N-terminus, the 319-residue chain is BTB/POZ domain-containing adapter for CUL3-mediated RhoA degradation protein 2 (319 aa).

The region spanning 31-99 (KYIRLNVGGC…LRDDTITLPK (69 aa)) is the BTB domain.

Belongs to the BACURD family. As to quaternary structure, component of the BCR(TNFAIP1) E3 ubiquitin ligase complex, at least composed of cul3, tnfaip1/bacurd2 and rbx1.

The protein resides in the cytoplasm. It localises to the nucleus. It is found in the endosome. It participates in protein modification; protein ubiquitination. Its function is as follows. Substrate-specific adapter of a BCR (BTB-CUL3-RBX1) E3 ubiquitin-protein ligase complex involved in regulation of cytoskeleton structure. The BCR(TNFAIP1) E3 ubiquitin ligase complex mediates the ubiquitination of target proteins, leading to their degradation by the proteasome. This is BTB/POZ domain-containing adapter for CUL3-mediated RhoA degradation protein 2 (tnfaip1) from Xenopus tropicalis (Western clawed frog).